Reading from the N-terminus, the 259-residue chain is Deoxyribose-phosphate aldolase (259 aa).

Asp102 functions as the Proton donor/acceptor in the catalytic mechanism. Lys167 (schiff-base intermediate with acetaldehyde) is an active-site residue. Lys201 serves as the catalytic Proton donor/acceptor.

It belongs to the DeoC/FbaB aldolase family. DeoC type 2 subfamily.

The protein resides in the cytoplasm. It carries out the reaction 2-deoxy-D-ribose 5-phosphate = D-glyceraldehyde 3-phosphate + acetaldehyde. The protein operates within carbohydrate degradation; 2-deoxy-D-ribose 1-phosphate degradation; D-glyceraldehyde 3-phosphate and acetaldehyde from 2-deoxy-alpha-D-ribose 1-phosphate: step 2/2. Catalyzes a reversible aldol reaction between acetaldehyde and D-glyceraldehyde 3-phosphate to generate 2-deoxy-D-ribose 5-phosphate. The sequence is that of Deoxyribose-phosphate aldolase from Salmonella typhi.